The chain runs to 326 residues: Undecaprenyl-phosphate 4-deoxy-4-formamido-L-arabinose transferase (326 aa).

A run of 2 helical transmembrane segments spans residues 235 to 255 (LLSV…VLLI) and 270 to 290 (VFTL…GMGL).

Belongs to the glycosyltransferase 2 family.

The protein resides in the cell inner membrane. The catalysed reaction is UDP-4-deoxy-4-formamido-beta-L-arabinose + di-trans,octa-cis-undecaprenyl phosphate = 4-deoxy-4-formamido-alpha-L-arabinopyranosyl di-trans,octa-cis-undecaprenyl phosphate + UDP. It functions in the pathway glycolipid biosynthesis; 4-amino-4-deoxy-alpha-L-arabinose undecaprenyl phosphate biosynthesis; 4-amino-4-deoxy-alpha-L-arabinose undecaprenyl phosphate from UDP-4-deoxy-4-formamido-beta-L-arabinose and undecaprenyl phosphate: step 1/2. The protein operates within bacterial outer membrane biogenesis; lipopolysaccharide biosynthesis. In terms of biological role, catalyzes the transfer of 4-deoxy-4-formamido-L-arabinose from UDP to undecaprenyl phosphate. The modified arabinose is attached to lipid A and is required for resistance to polymyxin and cationic antimicrobial peptides. In Serratia proteamaculans (strain 568), this protein is Undecaprenyl-phosphate 4-deoxy-4-formamido-L-arabinose transferase.